A 282-amino-acid chain; its full sequence is BURP domain-containing protein BNM2A (282 aa).

The first 26 residues, 1–26, serve as a signal peptide directing secretion; sequence MASLRFSVTFPALLSLLLLSLWVVEA. Positions 60 to 282 constitute a BURP domain; sequence FFKISDLKLG…PLDNIVWVSK (223 aa).

In terms of tissue distribution, expressed in the radicle and cotyledon of germinating seeds 2 days post-imbibition (DPI), in stems and roots of 30-DPI young plants and in floral buds, but not in fully open flowers or leaves. Expressed in the embryo and seed coat tissues of developing seeds. The protein accumulates only in seeds and only long after transcript accumulation becomes evident.

Its subcellular location is the protein storage vacuole. The polypeptide is BURP domain-containing protein BNM2A (Brassica napus (Rape)).